The chain runs to 78 residues: MTDSIPKKPLKKGSLVFVDKENYIKSIEALASDHDLPNYVFEGPGEILSVKDEYAQIRWRRPVPDVWFKLEQLKEYLQ.

This sequence belongs to the complex I NdhO subunit family. NDH-1 can be composed of about 15 different subunits; different subcomplexes with different compositions have been identified which probably have different functions.

It is found in the cellular thylakoid membrane. The enzyme catalyses a plastoquinone + NADH + (n+1) H(+)(in) = a plastoquinol + NAD(+) + n H(+)(out). It catalyses the reaction a plastoquinone + NADPH + (n+1) H(+)(in) = a plastoquinol + NADP(+) + n H(+)(out). In terms of biological role, NDH-1 shuttles electrons from an unknown electron donor, via FMN and iron-sulfur (Fe-S) centers, to quinones in the respiratory and/or the photosynthetic chain. The immediate electron acceptor for the enzyme in this species is believed to be plastoquinone. Couples the redox reaction to proton translocation, and thus conserves the redox energy in a proton gradient. Cyanobacterial NDH-1 also plays a role in inorganic carbon-concentration. The polypeptide is NAD(P)H-quinone oxidoreductase subunit O (Prochlorococcus marinus (strain MIT 9301)).